The primary structure comprises 273 residues: Large ribosomal subunit protein uL2 (273 aa).

Residues 228–273 (VDHPHGGGEGKTSGGRHPVTPWGFPTKGKKTRKNKRTSKFIVKKRK) are disordered. Basic residues predominate over residues 254–273 (KGKKTRKNKRTSKFIVKKRK).

This sequence belongs to the universal ribosomal protein uL2 family. Part of the 50S ribosomal subunit. Forms a bridge to the 30S subunit in the 70S ribosome.

In terms of biological role, one of the primary rRNA binding proteins. Required for association of the 30S and 50S subunits to form the 70S ribosome, for tRNA binding and peptide bond formation. It has been suggested to have peptidyltransferase activity; this is somewhat controversial. Makes several contacts with the 16S rRNA in the 70S ribosome. In Rickettsia africae (strain ESF-5), this protein is Large ribosomal subunit protein uL2.